Reading from the N-terminus, the 321-residue chain is tRNA-dihydrouridine synthase B (321 aa).

FMN is bound by residues 16 to 18 (PMA) and glutamine 70. Residue cysteine 100 is the Proton donor of the active site. FMN contacts are provided by residues lysine 139, 200 to 202 (NGD), and 224 to 225 (GR).

This sequence belongs to the Dus family. DusB subfamily. The cofactor is FMN.

It carries out the reaction a 5,6-dihydrouridine in tRNA + NAD(+) = a uridine in tRNA + NADH + H(+). It catalyses the reaction a 5,6-dihydrouridine in tRNA + NADP(+) = a uridine in tRNA + NADPH + H(+). In terms of biological role, catalyzes the synthesis of 5,6-dihydrouridine (D), a modified base found in the D-loop of most tRNAs, via the reduction of the C5-C6 double bond in target uridines. The protein is tRNA-dihydrouridine synthase B of Salmonella typhi.